A 244-amino-acid polypeptide reads, in one-letter code: 2-C-methyl-D-erythritol 4-phosphate cytidylyltransferase (244 aa).

It belongs to the IspD/TarI cytidylyltransferase family. IspD subfamily.

It carries out the reaction 2-C-methyl-D-erythritol 4-phosphate + CTP + H(+) = 4-CDP-2-C-methyl-D-erythritol + diphosphate. It participates in isoprenoid biosynthesis; isopentenyl diphosphate biosynthesis via DXP pathway; isopentenyl diphosphate from 1-deoxy-D-xylulose 5-phosphate: step 2/6. Catalyzes the formation of 4-diphosphocytidyl-2-C-methyl-D-erythritol from CTP and 2-C-methyl-D-erythritol 4-phosphate (MEP). In Solibacter usitatus (strain Ellin6076), this protein is 2-C-methyl-D-erythritol 4-phosphate cytidylyltransferase.